Here is a 224-residue protein sequence, read N- to C-terminus: Small ribosomal subunit protein uS2 (224 aa).

Positions 1–14 are enriched in basic and acidic residues; the sequence is MAEAKPAPEKEAAV. Positions 1–32 are disordered; it reads MAEAKPAPEKEAAVKTESVPVADDEAASAKEG.

It belongs to the universal ribosomal protein uS2 family.

The polypeptide is Small ribosomal subunit protein uS2 (Methanosarcina mazei (strain ATCC BAA-159 / DSM 3647 / Goe1 / Go1 / JCM 11833 / OCM 88) (Methanosarcina frisia)).